A 640-amino-acid chain; its full sequence is Chaperone protein DnaK (640 aa).

A Phosphothreonine; by autocatalysis modification is found at threonine 199. The disordered stretch occupies residues 603 to 640; the sequence is YTQQAEEPQPQKEEGKAAEEDVVDAEFEEVKEDKNKAS. Basic and acidic residues predominate over residues 611 to 621; it reads QPQKEEGKAAE. Residues 622 to 632 show a composition bias toward acidic residues; sequence EDVVDAEFEEV.

This sequence belongs to the heat shock protein 70 family.

Acts as a chaperone. This Nitrosococcus oceani (strain ATCC 19707 / BCRC 17464 / JCM 30415 / NCIMB 11848 / C-107) protein is Chaperone protein DnaK.